Here is a 1036-residue protein sequence, read N- to C-terminus: Vacuolar basic amino acid transporter VSB1 (1036 aa).

Topologically, residues 1-213 (MGRTIRRRRS…SKFAHYLPAA (213 aa)) are vacuolar. Phosphoserine occurs at positions 42 and 127. The residue at position 130 (threonine 130) is a Phosphothreonine. 5 positions are modified to phosphoserine: serine 140, serine 144, serine 149, serine 152, and serine 153. The helical transmembrane segment at 214-234 (VLGLLLNILDALSYGMIIFPI) threads the bilayer. The Cytoplasmic portion of the chain corresponds to 235-236 (TE). The helical transmembrane segment at 237-257 (PVFSHLGPTGISMFYISTIIS) threads the bilayer. Residues 258–269 (QAVYSGGWSSFP) are Vacuolar-facing. The helical transmembrane segment at 270–290 (SGIGSEMIEITPFYHTMALAI) threads the bilayer. At 291–300 (KEALAGNDDE) the chain is on the cytoplasmic side. The helical transmembrane segment at 301 to 321 (IITTTIFCYVISSMLTGVVFY) threads the bilayer. Topologically, residues 322–338 (ALGKLRLGKIVGFFPRH) are vacuolar. The helical transmembrane segment at 339–359 (ILIGCIGGVGYFLIITGIEVT) threads the bilayer. Residues 360–375 (TRVAKFEYSWPFFSGL) are Cytoplasmic-facing. Residues 376-396 (FTDYDTLAKWLLPVLLTVVLI) traverse the membrane as a helical segment. Residues 397-405 (GTQRYFKNS) are Vacuolar-facing. Residues 406–426 (LVLPSFYILTLVLFHFIVAII) traverse the membrane as a helical segment. Residues 427 to 473 (PTLSLDALRQAGWIFPIANSDSKWYDHYRLFNVHKVHWSLVLQQIPT) lie on the Cytoplasmic side of the membrane. A helical transmembrane segment spans residues 474–494 (MMALTFFGILHVPINVPALAM). At 495–515 (SLQMDKYDVDRELIAHGYSNF) the chain is on the vacuolar side. The chain crosses the membrane as a helical span at residues 516-536 (FSGLLGSVQNYLVYTNSVLFI). Residues 537 to 546 (RAGADSPFAG) are Cytoplasmic-facing. Residues 547-567 (FLLIALTICIMIIGPVIISFI) traverse the membrane as a helical segment. Proline 568 is a topological domain (vacuolar). A helical transmembrane segment spans residues 569–589 (ICIVGSLIFLLGYELLVEALV). At 590-604 (DTWNKLNRFEYLTVV) the chain is on the cytoplasmic side. The helical transmembrane segment at 605–625 (IIVFTMGIFDFVLGIIVGILI) threads the bilayer. Residues 626–664 (ACFSFLVDSTKLQTINGEYNGNVARSTVYRDYVQTKFLD) are Vacuolar-facing. One can recognise an STAS domain in the interval 660–781 (TKFLDGIGEQ…ADLNSALEWC (122 aa)). A helical transmembrane segment spans residues 665 to 685 (GIGEQIYVLKLQNLLFFGTII). The Cytoplasmic segment spans residues 686–1036 (SIEEKIERLL…ELLGYTLVSA (351 aa)). Position 842 is a phosphoserine (serine 842). Threonine 847 bears the Phosphothreonine mark.

It is found in the vacuole membrane. Its function is as follows. Amino acid transporter involved in vacuolar uptake of basic amino acids for storage during nitrogen replete condititions. May function as an amino acid/proton antiporter. In Saccharomyces cerevisiae (strain ATCC 204508 / S288c) (Baker's yeast), this protein is Vacuolar basic amino acid transporter VSB1.